The sequence spans 223 residues: ATP phosphoribosyltransferase (223 aa).

This sequence belongs to the ATP phosphoribosyltransferase family. Short subfamily. As to quaternary structure, heteromultimer composed of HisG and HisZ subunits.

It localises to the cytoplasm. It catalyses the reaction 1-(5-phospho-beta-D-ribosyl)-ATP + diphosphate = 5-phospho-alpha-D-ribose 1-diphosphate + ATP. It functions in the pathway amino-acid biosynthesis; L-histidine biosynthesis; L-histidine from 5-phospho-alpha-D-ribose 1-diphosphate: step 1/9. Its function is as follows. Catalyzes the condensation of ATP and 5-phosphoribose 1-diphosphate to form N'-(5'-phosphoribosyl)-ATP (PR-ATP). Has a crucial role in the pathway because the rate of histidine biosynthesis seems to be controlled primarily by regulation of HisG enzymatic activity. The chain is ATP phosphoribosyltransferase from Bordetella pertussis (strain Tohama I / ATCC BAA-589 / NCTC 13251).